The following is a 106-amino-acid chain: Minor capsid protein VP2 (106 aa).

The protein belongs to the vesivirus VP2 protein family. As to quaternary structure, homooligomer. The portal-like structure consists in 12 copies of VP2. Interacts with capsid protein VP1.

It is found in the virion. The protein localises to the host cytoplasm. In terms of biological role, minor structural protein that forms a portal-like structure at a unique three-fold axis of symmetry, following binding to the host receptor. The virion attaches to feline junctional adhesion molecule A (F11R). Once attached, the virion is endocytosed. Acidification of the endosome induces conformational change of capsid protein thereby injecting virus genomic RNA into host cytoplasm. The channel formed by VP2 may allow the delivery of the viral genome through the host endosomal membrane. This is Minor capsid protein VP2 from Feline calicivirus (strain Japanese F4) (FCV).